The sequence spans 65 residues: Large ribosomal subunit protein bL35 (65 aa).

The protein belongs to the bacterial ribosomal protein bL35 family.

The protein is Large ribosomal subunit protein bL35 of Polynucleobacter asymbioticus (strain DSM 18221 / CIP 109841 / QLW-P1DMWA-1) (Polynucleobacter necessarius subsp. asymbioticus).